Here is a 339-residue protein sequence, read N- to C-terminus: Dihydroorotase (339 aa).

Zn(2+)-binding residues include His-12 and His-14. Substrate-binding positions include 14 to 16 and Asn-40; that span reads HVR. Zn(2+) contacts are provided by Lys-94, His-133, His-167, and Asp-239. Lys-94 carries the post-translational modification N6-carboxylysine. His-133 serves as a coordination point for substrate. Asp-239 is a catalytic residue. Substrate is bound by residues His-243 and Ala-255.

It belongs to the metallo-dependent hydrolases superfamily. DHOase family. Class II DHOase subfamily. In terms of assembly, homodimer. Requires Zn(2+) as cofactor.

It carries out the reaction (S)-dihydroorotate + H2O = N-carbamoyl-L-aspartate + H(+). The protein operates within pyrimidine metabolism; UMP biosynthesis via de novo pathway; (S)-dihydroorotate from bicarbonate: step 3/3. In terms of biological role, catalyzes the reversible cyclization of carbamoyl aspartate to dihydroorotate. In Helicobacter pylori (strain P12), this protein is Dihydroorotase.